A 736-amino-acid polypeptide reads, in one-letter code: Copper-exporting P-type ATPase (736 aa).

The span at 1 to 17 (MKHDHHQGHTHSGKGHA) shows a compositional bias: basic residues. The disordered stretch occupies residues 1-32 (MKHDHHQGHTHSGKGHACHHEHNSPKTQQASS). A run of 6 helical transmembrane segments spans residues 85–105 (FWIA…GHGL), 114–134 (SSWI…WPFF), 149–169 (FTLI…AVLW), 183–203 (VVAV…LGQV), 341–361 (GWFV…WALL), and 369–389 (YGLI…LGLA). The active-site 4-aspartylphosphate intermediate is the aspartate 426. Residues aspartate 426, threonine 428, and aspartate 624 each coordinate Mg(2+). A run of 2 helical transmembrane segments spans residues 682 to 702 (LFFA…VLYP) and 706 to 726 (LLLS…SVII).

This sequence belongs to the cation transport ATPase (P-type) (TC 3.A.3) family. Type IB subfamily. The cofactor is Mg(2+).

It localises to the cell inner membrane. The enzyme catalyses Cu(+)(in) + ATP + H2O = Cu(+)(out) + ADP + phosphate + H(+). Activated by phospholipids, Mg(2+) and Cu(+). Couples the hydrolysis of ATP with the export of copper. The protein is Copper-exporting P-type ATPase of Legionella pneumophila subsp. pneumophila (strain Philadelphia 1 / ATCC 33152 / DSM 7513).